Here is a 1105-residue protein sequence, read N- to C-terminus: Lysylphosphatidylglycerol biosynthesis bifunctional protein LysX (1105 aa).

The tract at residues 1-603 is phosphatidylglycerol lysyltransferase; that stretch reads MTVTKPRSVQ…LLHHDGSAPD (603 aa). 7 helical membrane-spanning segments follow: residues 20–40, 62–82, 86–106, 117–137, 154–174, 186–203, and 208–228; these read VPAAAGWAVGVIATLSLLASI, FPDTSFAWSFVLALLAAALAA, IAWLLLLTNVVLAAFLNAADI, FGENLGFAVHVVAIVVLVLGY, AVLVAGGAIGILVSWGLVELF, YVANRVIGFALADPDLFT, and VFLNAMFGLFGALALIAATIV. The segment at 604-1105 is lysine--tRNA ligase; sequence VSGLRQSAIA…TLPFPLAKPH (502 aa). Aspartate 1017 and glutamate 1024 together coordinate Mg(2+).

The protein in the N-terminal section; belongs to the LPG synthetase family. This sequence in the C-terminal section; belongs to the class-II aminoacyl-tRNA synthetase family. Mg(2+) is required as a cofactor.

Its subcellular location is the cell membrane. It carries out the reaction tRNA(Lys) + L-lysine + ATP = L-lysyl-tRNA(Lys) + AMP + diphosphate. The enzyme catalyses L-lysyl-tRNA(Lys) + a 1,2-diacyl-sn-glycero-3-phospho-(1'-sn-glycerol) = a 1,2-diacyl-sn-glycero-3-phospho-1'-(3'-O-L-lysyl)-sn-glycerol + tRNA(Lys). Functionally, catalyzes the production of L-lysyl-tRNA(Lys)transfer and the transfer of a lysyl group from L-lysyl-tRNA(Lys) to membrane-bound phosphatidylglycerol (PG), which produces lysylphosphatidylglycerol (LPG), one of the components of the bacterial membrane with a positive net charge. LPG synthesis contributes to the resistance to cationic antimicrobial peptides (CAMPs) and likely protects M.tuberculosis against the CAMPs produced by competiting microorganisms (bacteriocins). In fact, the modification of anionic phosphatidylglycerol with positively charged L-lysine results in repulsion of the peptides. The sequence is that of Lysylphosphatidylglycerol biosynthesis bifunctional protein LysX (lysX) from Mycobacterium marinum (strain ATCC BAA-535 / M).